Reading from the N-terminus, the 39-residue chain is Photosystem II reaction center protein L (39 aa).

The helical transmembrane segment at 18–38 threads the bilayer; that stretch reads SLYLGLLLVFVLGILFSSYFF.

This sequence belongs to the PsbL family. As to quaternary structure, PSII is composed of 1 copy each of membrane proteins PsbA, PsbB, PsbC, PsbD, PsbE, PsbF, PsbH, PsbI, PsbJ, PsbK, PsbL, PsbM, PsbT, PsbX, PsbY, Psb30/Ycf12, peripheral proteins PsbO, CyanoQ (PsbQ), PsbU, PsbV and a large number of cofactors. It forms dimeric complexes.

The protein resides in the cellular thylakoid membrane. One of the components of the core complex of photosystem II (PSII). PSII is a light-driven water:plastoquinone oxidoreductase that uses light energy to abstract electrons from H(2)O, generating O(2) and a proton gradient subsequently used for ATP formation. It consists of a core antenna complex that captures photons, and an electron transfer chain that converts photonic excitation into a charge separation. This subunit is found at the monomer-monomer interface and is required for correct PSII assembly and/or dimerization. The sequence is that of Photosystem II reaction center protein L from Prochlorococcus marinus (strain SARG / CCMP1375 / SS120).